Reading from the N-terminus, the 508-residue chain is Ell-associated factor Eaf (508 aa).

Composition is skewed to polar residues over residues 140–150 and 161–190; these read GQGQLHSQGAN and GHST…SRRN. Disordered stretches follow at residues 140 to 226 and 251 to 508; these read GQGQ…WDAN and HNSG…DDDE. At serine 200 the chain carries Phosphoserine. The span at 251–268 shows a compositional bias: low complexity; the sequence is HNSGHANTSGSSTGSATG. Polar residues-rich tracts occupy residues 272–281 and 296–313; these read FGSTSSSSHM and QQMQ…QQPS. The span at 314-341 shows a compositional bias: low complexity; sequence NYGRGYNGGHNHVQQQQQRNSPQQQRPP. Residues 391-406 are compositionally biased toward acidic residues; sequence DSSDSDSGSDSDDSTE. Low complexity-rich tracts occupy residues 412–444, 461–477, and 489–502; these read QGQQ…HLNQ, HQHQ…QKQQ, and NDLL…SSNS.

It belongs to the EAF family.

The protein resides in the nucleus. Its function is as follows. Promotes transcriptional elongation by Su(Tpl)/ELL. Essential for development. The polypeptide is Ell-associated factor Eaf (Drosophila erecta (Fruit fly)).